The primary structure comprises 132 residues: S-protein homolog 15 (132 aa).

The signal sequence occupies residues 1-20 (MSRLIFFILVTAIYFVGNEA).

This sequence belongs to the plant self-incompatibility (S1) protein family.

It is found in the secreted. This is S-protein homolog 15 from Arabidopsis thaliana (Mouse-ear cress).